We begin with the raw amino-acid sequence, 384 residues long: 4-coumarate--CoA ligase (384 aa).

The protein belongs to the ATP-dependent AMP-binding enzyme family.

It carries out the reaction (E)-4-coumarate + ATP + CoA = (E)-4-coumaroyl-CoA + AMP + diphosphate. Functionally, converts p-coumaric acid into p-coumaryl CoA. This is necessary for the activation of the photoactive yellow protein (PYP) chromophore. The sequence is that of 4-coumarate--CoA ligase (pcl) from Rhodobacter capsulatus (strain ATCC BAA-309 / NBRC 16581 / SB1003).